A 75-amino-acid chain; its full sequence is Putative DNA-directed RNA polymerase subunit omega (75 aa).

It belongs to the RNA polymerase subunit omega family.

Its subcellular location is the plastid. The protein resides in the chloroplast. The enzyme catalyses RNA(n) + a ribonucleoside 5'-triphosphate = RNA(n+1) + diphosphate. In terms of biological role, may be involved in RNA polymerase activity. In Pyropia yezoensis (Susabi-nori), this protein is Putative DNA-directed RNA polymerase subunit omega.